Reading from the N-terminus, the 1696-residue chain is uncharacterized protein (1696 aa).

4 disordered regions span residues 1-113 (MDSS…HPQY), 151-194 (DSWT…SRSR), 258-284 (DVTR…PEKK), and 299-376 (GRRE…KQRG). The span at 21–42 (LHPPSAPLPPPPPLPPPPPPRQ) shows a compositional bias: pro residues. Residues 52 to 61 (GRSTQSNGQR) are compositionally biased toward polar residues. The span at 96-113 (QQQHQPLSLQQQQQHPQY) shows a compositional bias: low complexity. The span at 170–183 (RNYQYDYSRNSSGV) shows a compositional bias: polar residues. Basic and acidic residues-rich tracts occupy residues 267 to 284 (EGAR…PEKK), 325 to 340 (ETPR…EWSR), and 358 to 376 (RGKE…KQRG). S378 is modified (phosphoserine). 7 disordered regions span residues 419-483 (RALL…GGKL), 688-724 (SDIG…LDSP), 1063-1090 (IKHK…GGTS), 1184-1211 (TSKS…VAGS), 1319-1340 (GEAV…SGVR), 1361-1429 (VVSV…SDAS), and 1658-1696 (SESR…DSGM). Basic and acidic residues-rich tracts occupy residues 421-436 (LLSD…ERNG) and 695-704 (DDNKRIDKNV). S708 carries the phosphoserine modification. Residues 1184–1204 (TSKSIEKIESSGGTSEHRTPE) are compositionally biased toward basic and acidic residues. Basic and acidic residues predominate over residues 1361-1370 (VVSVPHRDPQ). Polar residues-rich tracts occupy residues 1389 to 1398 (NYSTQKSYPS), 1658 to 1667 (SESRCNQSIS), and 1677 to 1696 (SAAN…DSGM).

This is an uncharacterized protein from Arabidopsis thaliana (Mouse-ear cress).